We begin with the raw amino-acid sequence, 412 residues long: Tyrosine--tRNA ligase (412 aa).

Positions 50–59 match the 'HIGH' region motif; sequence PTGTDIHLGH. A 'KMSKS' region motif is present at residues 244–248; that stretch reads KMSKS. K247 serves as a coordination point for ATP. Positions 348–411 constitute an S4 RNA-binding domain; it reads VKFFYLLSSL…IGKKIIKRFE (64 aa).

The protein belongs to the class-I aminoacyl-tRNA synthetase family. TyrS type 2 subfamily. In terms of assembly, homodimer.

Its subcellular location is the cytoplasm. The catalysed reaction is tRNA(Tyr) + L-tyrosine + ATP = L-tyrosyl-tRNA(Tyr) + AMP + diphosphate + H(+). Functionally, catalyzes the attachment of tyrosine to tRNA(Tyr) in a two-step reaction: tyrosine is first activated by ATP to form Tyr-AMP and then transferred to the acceptor end of tRNA(Tyr). This chain is Tyrosine--tRNA ligase, found in Prochlorococcus marinus (strain MIT 9312).